The sequence spans 2223 residues: Protein CHROMATIN REMODELING 4 (2223 aa).

A disordered region spans residues 39 to 69 (FDSPEYTSSSKPSKQRLKTDSTPERNSSKRK). Positions 55–69 (LKTDSTPERNSSKRK) are enriched in basic and acidic residues. Residues 75 to 122 (YFECVICDLGGDLLCCDSCPRTYHTACLNPPLKRIPNGKWICPKCSPN) form a PHD-type zinc finger. Basic and acidic residues-rich tracts occupy residues 173–187 (EKGKSISAEESKSTG), 207–223 (SADDRPDSSSHGEDDLG), 248–285 (ESKLSDTEKTHEAPVEKLEHASSEIVENKTVAEMETGK), and 294–305 (ELNDGESLERCK). Disordered stretches follow at residues 173–235 (EKGK…LPSD), 248–381 (ESKL…CLED), and 441–474 (AEDRIDSSSETGKSSRDSRLRDKDMDDSALGTEG). Positions 306-315 (TDKKRAKKSL) are enriched in basic residues. Residues 353 to 368 (ETPEKVKKLPKEERRA) show a composition bias toward basic and acidic residues. The segment covering 372 to 381 (TNKSSSCLED) has biased composition (polar residues). A compositionally biased stretch (basic and acidic residues) spans 441–466 (AEDRIDSSSETGKSSRDSRLRDKDMD). Chromo domains are found at residues 531-587 (EEIE…YKAK) and 601-663 (KQPQ…ERNS). The region spanning 701–878 (RRCWHKSKNV…YNLLNFLQPS (178 aa)) is the Helicase ATP-binding domain. Position 714–721 (714–721 (DEMGLGKT)) interacts with ATP. Residues 829-832 (DEGH) carry the DEAH box motif. The Nuclear localization signal motif lies at 902–909 (LKKLVAPH). The region spanning 1008-1167 (LLHSMLKVLH…GSQKEFEDIL (160 aa)) is the Helicase C-terminal domain. Disordered regions lie at residues 1268–1300 (EETAEEQVGAESPALVTDDTGEPSSERKDDDVV), 1341–1380 (EAYAPHTSGPVNESGGEDEKEPEPELKKEYTPAGRALKEK), 1394–1463 (RRNS…ECLP), 1483–1511 (SESSRRNYSRPGSRQNRPITGPHFPFNLP), 1760–1779 (LSSLPSKSSRTDKSTKSSLF), and 2006–2223 (IPPF…LSDD). Residues 1363 to 1380 (EPELKKEYTPAGRALKEK) are compositionally biased toward basic and acidic residues. A coiled-coil region spans residues 1375–1402 (RALKEKFTKLRERQKNLIARRNSVEESL). Polar residues predominate over residues 1403 to 1414 (PSGNVDQVTEVA). The span at 2009–2019 (FVIPEPPPPAP) shows a compositional bias: pro residues. Residues 2025–2035 (SLRKKRKRKLH) are compositionally biased toward basic residues. Polar residues-rich tracts occupy residues 2039 to 2061 (QKTTDIGSSSHNAVESSSQGNPQ), 2075 to 2096 (GETSGSSQPKLPPHNLNSTEPL), and 2128 to 2148 (TGTTKSISLESQSSEPETINQ). The segment covering 2157–2171 (DEKVESERTPLHSDE) has biased composition (basic and acidic residues). The stretch at 2189 to 2215 (IEAESQNTNAEEEAEAQEEDEESMKMV) forms a coiled coil. Over residues 2198–2210 (AEEEAEAQEEDEE) the composition is skewed to acidic residues.

Belongs to the SNF2/RAD54 helicase family.

The protein resides in the nucleus. In terms of biological role, chromatin-remodeling protein that binds DNA through histones and regulates gene transcription. May specifically recognize and bind trimethylated 'Lys-27' (H3K27me3) and non-methylated 'Lys-4' of histone H3. Probable chromatin remodeling factor. This Arabidopsis thaliana (Mouse-ear cress) protein is Protein CHROMATIN REMODELING 4.